The primary structure comprises 316 residues: tRNA dimethylallyltransferase (316 aa).

Gly-17–Thr-24 is a binding site for ATP. Thr-19–Thr-24 contacts substrate. Interaction with substrate tRNA regions lie at residues Asp-42–Leu-45, Gln-166–Arg-170, Arg-247–Arg-252, and Lys-280–Arg-287.

Belongs to the IPP transferase family. In terms of assembly, monomer. Mg(2+) is required as a cofactor.

The catalysed reaction is adenosine(37) in tRNA + dimethylallyl diphosphate = N(6)-dimethylallyladenosine(37) in tRNA + diphosphate. In terms of biological role, catalyzes the transfer of a dimethylallyl group onto the adenine at position 37 in tRNAs that read codons beginning with uridine, leading to the formation of N6-(dimethylallyl)adenosine (i(6)A). This chain is tRNA dimethylallyltransferase, found in Shigella flexneri serotype 5b (strain 8401).